Consider the following 248-residue polypeptide: Pyridoxal 4-dehydrogenase (248 aa).

NAD(+) is bound at residue 11–35 (LVTGAAQGIGKAIAARLAADGATVI). Ser-141 provides a ligand contact to substrate. The Proton acceptor role is filled by Tyr-154.

This sequence belongs to the short-chain dehydrogenases/reductases (SDR) family. In terms of assembly, homotetramer.

It carries out the reaction pyridoxal + NAD(+) = 4-pyridoxolactone + NADH + H(+). The protein operates within cofactor degradation; B6 vitamer degradation; 4-pyridoxate from pyridoxal: step 1/2. Involved in the degradation of pyridoxine or pyridoxamine (free, phosphate-unbound, forms of vitamin B6). Oxidizes pyridoxal to 4-pyridoxolactone, but does not have activity toward pyridoxal 5'-phosphate, pyridoxine, pyridoxamine, pyridoxamine 5'-phosphate, 4-phthalaldehyde, 2-nitrobenzaldehyde, pyridine, formaldehyde, 2-carboxybenzaldehyde or sugars. The chain is Pyridoxal 4-dehydrogenase from Mesorhizobium japonicum (strain LMG 29417 / CECT 9101 / MAFF 303099) (Mesorhizobium loti (strain MAFF 303099)).